The following is a 335-amino-acid chain: Lipase chaperone (335 aa).

Residues 7 to 23 (LLPLAIALGLGFFIARP) form a helical membrane-spanning segment.

This sequence belongs to the lipase chaperone family.

The protein localises to the cell inner membrane. Functionally, may be involved in the folding of the extracellular lipase during its passage through the periplasm. The protein is Lipase chaperone (lifO) of Ectopseudomonas mendocina (Pseudomonas mendocina).